The primary structure comprises 641 residues: Bifunctional enzyme NodQ (641 aa).

A sulfate adenylyltransferase region spans residues 1-458 (MSYVQSIPPH…KSARSAMKNQ (458 aa)). The tr-type G domain occupies 22–236 (KSILRFITCG…YLETVELDPT (215 aa)). A G1 region spans residues 31–38 (GSVDDGKS). Residue 31–38 (GSVDDGKS) participates in GTP binding. Residues 89-93 (GITID) form a G2 region. Residues 110 to 113 (DTPG) form a G3 region. Residues 110-114 (DTPGH) and 165-168 (NKID) contribute to the GTP site. The segment at 165–168 (NKID) is G4. A G5 region spans residues 202 to 204 (SAR). The interval 459 to 641 (LPAVLWFTGL…GQMTPLQRPT (183 aa)) is adenylyl-sulfate kinase. 467–474 (GLSGSGKS) contacts ATP. The Phosphoserine intermediate role is filled by S541.

It in the C-terminal section; belongs to the APS kinase family. The protein in the N-terminal section; belongs to the TRAFAC class translation factor GTPase superfamily. Classic translation factor GTPase family. CysN/NodQ subfamily. As to quaternary structure, sulfate-activating enzymes, NodP and NodQ, may be physically associated.

The enzyme catalyses sulfate + ATP + H(+) = adenosine 5'-phosphosulfate + diphosphate. It carries out the reaction adenosine 5'-phosphosulfate + ATP = 3'-phosphoadenylyl sulfate + ADP + H(+). Functionally, proposed to provide activated sulfate for transfer to Nod factor. ATP sulfurylase may be the GTPase, regulating ATP sulfurylase activity. In terms of biological role, APS kinase catalyzes the synthesis of activated sulfate. The chain is Bifunctional enzyme NodQ (nodQ) from Rhizobium meliloti (strain 1021) (Ensifer meliloti).